A 260-amino-acid polypeptide reads, in one-letter code: Pyridoxine 5'-phosphate synthase (260 aa).

The 3-amino-2-oxopropyl phosphate site is built by N7 and R18. Catalysis depends on H43, which acts as the Proton acceptor. R45 and H50 together coordinate 1-deoxy-D-xylulose 5-phosphate. The active-site Proton acceptor is E83. Residue T113 participates in 1-deoxy-D-xylulose 5-phosphate binding. H208 acts as the Proton donor in catalysis. Residues D209 and 230–231 (GH) contribute to the 3-amino-2-oxopropyl phosphate site.

The protein belongs to the PNP synthase family. As to quaternary structure, homooctamer; tetramer of dimers.

The protein localises to the cytoplasm. It carries out the reaction 3-amino-2-oxopropyl phosphate + 1-deoxy-D-xylulose 5-phosphate = pyridoxine 5'-phosphate + phosphate + 2 H2O + H(+). It participates in cofactor biosynthesis; pyridoxine 5'-phosphate biosynthesis; pyridoxine 5'-phosphate from D-erythrose 4-phosphate: step 5/5. Functionally, catalyzes the complicated ring closure reaction between the two acyclic compounds 1-deoxy-D-xylulose-5-phosphate (DXP) and 3-amino-2-oxopropyl phosphate (1-amino-acetone-3-phosphate or AAP) to form pyridoxine 5'-phosphate (PNP) and inorganic phosphate. The polypeptide is Pyridoxine 5'-phosphate synthase (Leptospira biflexa serovar Patoc (strain Patoc 1 / Ames)).